Here is a 1795-residue protein sequence, read N- to C-terminus: Type III effector AvrE (1795 aa).

Over residues 1-18 (MQSPSIHRNTGSIIQPTV) the composition is skewed to polar residues. A disordered region spans residues 1 to 227 (MQSPSIHRNT…PPREPMLWRS (227 aa)). A compositionally biased stretch (low complexity) spans 60 to 75 (KSKAPQQKAATPPTAK). Polar residues-rich tracts occupy residues 97 to 109 (GFSN…THSA) and 117 to 127 (HPNQASSSGAQ). Positions 129-154 (HEIHPEAAPRKNLRVRFDLPQDRLER) are enriched in basic and acidic residues. Residues 174-191 (ATRQFRSPDSHLQGSDGT) show a composition bias toward polar residues. Positions 203–215 (PSSSGSKIGDSDG) are enriched in low complexity. 2 short sequence motifs (wxxxE) span residues 393–397 (WKIPE) and 829–833 (WQRFE). A disordered region spans residues 1461 to 1488 (QIGGSHTAPTGTPASAPGPTPASQTAAN). Residues 1467–1487 (TAPTGTPASAPGPTPASQTAA) are compositionally biased toward low complexity. Residues 1787–1790 (KKEG) carry the ERMRS motif.

This sequence belongs to the AvrE family. In terms of assembly, in planta interaction assays, interacts with the A.thaliana protein phosphatase 2A (PP2A) via direct interaction/association with specific B' regulatory subunits.

It localises to the secreted. The protein localises to the host cell. Its subcellular location is the host cell membrane. Polyamidoamine dendrimers inhibit channel and virulence activities. Major virulence factor that may function as a water- and solute-permeable channel dedicated to creating osmotic/water potential perturbation and a water- and nutrient-rich apoplast in which bacteria multiply within the infected plant tissues. Expression in Xenopus oocytes results in inward and outward currents, permeability to water and osmolarity-dependent oocyte swelling and bursting. Functionally, elicits cell death in host tomato leaves and in non-host Nicotiana tabacum leaves. Acts within plant cells and promotes lesion formation. The combined action of AvrE and HopM1 is particularly important in promoting bacterial growth in plants. Contributes to the down-regulation of a specific subset of A.thaliana genes during infection, including NHL13, which is required for antibacterial immunity. This Pseudomonas syringae pv. tomato (strain ATCC BAA-871 / DC3000) protein is Type III effector AvrE.